Reading from the N-terminus, the 204-residue chain is Lymphotoxin-alpha (204 aa).

Positions 1–33 are cleaved as a signal peptide; the sequence is MTPPGRLYLLRVCSTPPLLLLGLLLALPLEAQG. The THD domain occupies 62–204; it reads PAAHLVGDPS…SSVFFGAFAL (143 aa). N-linked (GlcNAc...) asparagine glycosylation occurs at asparagine 95. A disulfide bridge connects residues cysteine 119 and cysteine 155.

It belongs to the tumor necrosis factor family. Homotrimer, and heterotrimer of either two LTB and one LTA subunits or (less prevalent) two LTA and one LTB subunits. Interacts with TNFRSF14.

It localises to the secreted. Its subcellular location is the membrane. Cytokine that in its homotrimeric form binds to TNFRSF1A/TNFR1, TNFRSF1B/TNFBR and TNFRSF14/HVEM. In its heterotrimeric form with LTB binds to TNFRSF3/LTBR. Lymphotoxin is produced by lymphocytes and is cytotoxic for a wide range of tumor cells in vitro and in vivo. This Bos taurus (Bovine) protein is Lymphotoxin-alpha (LTA).